Here is a 393-residue protein sequence, read N- to C-terminus: NAD(P)H-quinone oxidoreductase subunit H, chloroplastic (393 aa).

The protein belongs to the complex I 49 kDa subunit family. NDH is composed of at least 16 different subunits, 5 of which are encoded in the nucleus.

It localises to the plastid. It is found in the chloroplast thylakoid membrane. The enzyme catalyses a plastoquinone + NADH + (n+1) H(+)(in) = a plastoquinol + NAD(+) + n H(+)(out). The catalysed reaction is a plastoquinone + NADPH + (n+1) H(+)(in) = a plastoquinol + NADP(+) + n H(+)(out). NDH shuttles electrons from NAD(P)H:plastoquinone, via FMN and iron-sulfur (Fe-S) centers, to quinones in the photosynthetic chain and possibly in a chloroplast respiratory chain. The immediate electron acceptor for the enzyme in this species is believed to be plastoquinone. Couples the redox reaction to proton translocation, and thus conserves the redox energy in a proton gradient. This is NAD(P)H-quinone oxidoreductase subunit H, chloroplastic from Helianthus annuus (Common sunflower).